The sequence spans 708 residues: Leukotoxin translocation ATP-binding protein LktB (708 aa).

Residues 1–126 (MEANHQRNDL…ACYQGQLILV (126 aa)) form the Peptidase C39 domain. One can recognise an ABC transmembrane type-1 domain in the interval 155-437 (FLETLIVSIF…LAQLWQDFQQ (283 aa)). Helical transmembrane passes span 159–179 (LIVSIFLQIFALITPLFFQVV), 192–212 (LNIITVALAIVIIFEIVLSGL), 270–290 (ALTSVLDLLFSFIFFAVMWYY), 296–316 (LVILGSLPCYILWSIFISPIL), and 389–409 (VMVINLWLGAHLVISGDLSIG). The ABC transporter domain occupies 469 to 704 (IAFKNIRFRY…SNGLYSYLHQ (236 aa)). ATP is bound at residue 503–510 (GRSGSGKS).

The protein belongs to the ABC transporter superfamily. Protein-1 exporter (TC 3.A.1.109) family. In terms of assembly, homodimer.

Its subcellular location is the cell inner membrane. The enzyme catalyses ATP + H2O + proteinSide 1 = ADP + phosphate + proteinSide 2.. Functionally, part of the ABC transporter complex LktBD involved in leukotoxin export. Transmembrane domains (TMD) form a pore in the inner membrane and the ATP-binding domain (NBD) is responsible for energy generation. The protein is Leukotoxin translocation ATP-binding protein LktB (lktB) of Mannheimia glucosida.